We begin with the raw amino-acid sequence, 219 residues long: Endonuclease III (219 aa).

Positions 109–128 constitute a HhH domain; sequence RDELVKLPGVGRKTANVVVS. Residues Cys-189, Cys-196, Cys-199, and Cys-205 each coordinate [4Fe-4S] cluster.

This sequence belongs to the Nth/MutY family. It depends on [4Fe-4S] cluster as a cofactor.

The catalysed reaction is 2'-deoxyribonucleotide-(2'-deoxyribose 5'-phosphate)-2'-deoxyribonucleotide-DNA = a 3'-end 2'-deoxyribonucleotide-(2,3-dehydro-2,3-deoxyribose 5'-phosphate)-DNA + a 5'-end 5'-phospho-2'-deoxyribonucleoside-DNA + H(+). In terms of biological role, DNA repair enzyme that has both DNA N-glycosylase activity and AP-lyase activity. The DNA N-glycosylase activity releases various damaged pyrimidines from DNA by cleaving the N-glycosidic bond, leaving an AP (apurinic/apyrimidinic) site. The AP-lyase activity cleaves the phosphodiester bond 3' to the AP site by a beta-elimination, leaving a 3'-terminal unsaturated sugar and a product with a terminal 5'-phosphate. In Bacillus subtilis (strain 168), this protein is Endonuclease III.